We begin with the raw amino-acid sequence, 102 residues long: UPF0235 protein Swol_0959 (102 aa).

Belongs to the UPF0235 family.

This Syntrophomonas wolfei subsp. wolfei (strain DSM 2245B / Goettingen) protein is UPF0235 protein Swol_0959.